The following is a 338-amino-acid chain: Mas-related G-protein coupled receptor member B2 (338 aa).

Residues 1–40 are Extracellular-facing; sequence MSGDFLIKNLSTSAWKTNITVLNGSYYIDTSVCVTRNQAM. N9, N18, and N23 each carry an N-linked (GlcNAc...) asparagine glycan. The helical transmembrane segment at 41–61 threads the bilayer; the sequence is ILLSIIISLVGMGLNAIVLWF. The Cytoplasmic portion of the chain corresponds to 62–89; the sequence is LGIRMHTNAFTVYILNLAMADFLYLCSQ. A helical membrane pass occupies residues 90 to 110; the sequence is FVICLLIAFYIFYSIDINIPL. V111 is a topological domain (extracellular). A helical transmembrane segment spans residues 112–132; it reads LYVVPIFAYLSGLSILSTISI. The Cytoplasmic portion of the chain corresponds to 133-157; that stretch reads ERCLSVIWPIWYRCKRPRHTSAITC. A helical membrane pass occupies residues 158–178; sequence FVLWVMSLLLGLLEGKACGLL. Residues 179–191 lie on the Extracellular side of the membrane; that stretch reads FNSFDSYWCETFD. A helical membrane pass occupies residues 192–212; sequence VITNIWSVVFFGVLCGSSLTL. At 213 to 231 the chain is on the cytoplasmic side; that stretch reads LVRIFCGSQRIPMTRLYVT. Residues 232 to 252 form a helical membrane-spanning segment; the sequence is ITLTVLVFLIFGLPFGIYWIL. Residues 253 to 268 are Extracellular-facing; that stretch reads YQWISNFYYVEICNFY. The helical transmembrane segment at 269–289 threads the bilayer; sequence LEILFLSCVNSCMNPIIYFLV. At 290-338 the chain is on the cytoplasmic side; it reads GSIRHRRFRRKTLKLLLQRAMQDTPEEEQSGNKSSSEHPEELETVQSCS. The interval 310-338 is disordered; that stretch reads MQDTPEEEQSGNKSSSEHPEELETVQSCS.

The protein belongs to the G-protein coupled receptor 1 family. Mas subfamily. In terms of tissue distribution, mast cell-specific.

Its subcellular location is the cell membrane. Mast cell-specific receptor for basic secretagogues, i.e. cationic amphiphilic drugs, as well as endo- or exogenous peptides, consisting of a basic head group and a hydrophobic core. Recognizes and binds small molecules containing a cyclized tetrahydroisoquinoline (THIQ), such as non-steroidal neuromuscular blocking drugs (NMBDs), including tubocurarine and atracurium. In response to these compounds, mediates pseudo-allergic reactions characterized by histamine release, inflammation and airway contraction. The chain is Mas-related G-protein coupled receptor member B2 (Mrgprb2) from Mus musculus (Mouse).